The primary structure comprises 154 residues: Protein X (154 aa).

A disordered region spans residues 28–48 (RPLPGPLGTLPPASPPAVPTD). Residues 68-117 (PCALRFTSARRMETTVNAHGNLPKVLHKRTLGLSAMSTTDLEAYFKDCVF) form a mitochondrial targeting sequence region.

It belongs to the orthohepadnavirus protein X family. May form homodimer. May interact with host CEBPA, CFLAR, CREB1, DDB1, E4F1, HBXIP, HSPD1/HSP60, NFKBIA, POLR2E and SMAD4. Interacts with host SMC5-SMC6 complex and induces its degradation. Interacts with host TRPC4AP; leading to prevent ubiquitination of TRPC4AP. Interacts with host PLSCR1; this interaction promotes ubiquitination and degradation of HBx and impairs HBx-mediated cell proliferation. In terms of processing, a fraction may be phosphorylated in insect cells and HepG2 cells, a human hepatoblastoma cell line. Phosphorylated in vitro by host protein kinase C or mitogen-activated protein kinase. N-acetylated in insect cells.

It localises to the host cytoplasm. The protein localises to the host nucleus. It is found in the host mitochondrion. Functionally, multifunctional protein that plays a role in silencing host antiviral defenses and promoting viral transcription. Does not seem to be essential for HBV infection. May be directly involved in development of cirrhosis and liver cancer (hepatocellular carcinoma). Most of cytosolic activities involve modulation of cytosolic calcium. The effect on apoptosis is controversial depending on the cell types in which the studies have been conducted. May induce apoptosis by localizing in mitochondria and causing loss of mitochondrial membrane potential. May also modulate apoptosis by binding host CFLAR, a key regulator of the death-inducing signaling complex (DISC). Promotes viral transcription by using the host E3 ubiquitin ligase DDB1 to target the SMC5-SMC6 complex to proteasomal degradation. This host complex would otherwise bind to viral episomal DNA, and prevents its transcription. Moderately stimulates transcription of many different viral and cellular transcription elements. Promoters and enhancers stimulated by HBx contain DNA binding sites for NF-kappa-B, AP-1, AP-2, c-EBP, ATF/CREB, or the calcium-activated factor NF-AT. This chain is Protein X, found in Hepatitis B virus genotype B2 subtype adw (isolate China/patient4/1996) (HBV-B).